We begin with the raw amino-acid sequence, 195 residues long: Cysteine/O-acetylserine efflux protein (195 aa).

At 1-9 (MTPILLSAF) the chain is on the periplasmic side. A helical transmembrane segment spans residues 10-32 (WTYTLITAMTPGPNNILALSSAT). Residues 33–46 (SHGFRQSTRVLAGM) are Cytoplasmic-facing. A helical membrane pass occupies residues 47–67 (SLGFLIVMLLCAGISFSLAVI). Residues 68–69 (DP) are Periplasmic-facing. Residues 70 to 90 (AAVHLLSWAGAAYIVWLAWKI) traverse the membrane as a helical segment. Residues 91 to 104 (ATSPTKEDGLQAKP) are Cytoplasmic-facing. The chain crosses the membrane as a helical span at residues 105–125 (ISFWASFALQFVNVKIILYGV). The Periplasmic segment spans residues 126-141 (TALSTFVLPQTQALSW). Residues 142-162 (VVGVSVLLAMIGTFGNVCWAL) traverse the membrane as a helical segment. Topologically, residues 163–176 (AGHLFQRLFRQYGR) are cytoplasmic. Residues 177–194 (QLNIVLALLLVYCAVRIF) traverse the membrane as a helical segment. Residue Tyr-195 is a topological domain, periplasmic.

The protein belongs to the Rht family.

The protein localises to the cell inner membrane. It carries out the reaction O-acetyl-L-serine(in) = O-acetyl-L-serine(out). It catalyses the reaction L-cysteine(in) = L-cysteine(out). Exporter of O-acetylserine (OAS) and cysteine. The chain is Cysteine/O-acetylserine efflux protein (eamB) from Shigella flexneri serotype 5b (strain 8401).